The following is a 294-amino-acid chain: Cell division protein ZipA (294 aa).

Met1 is a topological domain (periplasmic). Residues 2-22 (EIGLREWLILIGIIVIAGILF) form a helical membrane-spanning segment. Topologically, residues 23 to 294 (DGWRRMRGGK…FERRALTQKR (272 aa)) are cytoplasmic. The disordered stretch occupies residues 47 to 107 (PDEEGSAEVL…GKRAAEMQPQ (61 aa)). Positions 82-91 (AREREREQKP) are enriched in basic and acidic residues.

The protein belongs to the ZipA family. In terms of assembly, interacts with FtsZ via their C-terminal domains.

It localises to the cell inner membrane. Functionally, essential cell division protein that stabilizes the FtsZ protofilaments by cross-linking them and that serves as a cytoplasmic membrane anchor for the Z ring. Also required for the recruitment to the septal ring of downstream cell division proteins. This chain is Cell division protein ZipA, found in Pseudomonas putida (strain W619).